We begin with the raw amino-acid sequence, 166 residues long: Ribosome maturation factor RimM (166 aa).

Residues E90–W163 form the PRC barrel domain.

This sequence belongs to the RimM family. In terms of assembly, binds ribosomal protein uS19.

It is found in the cytoplasm. Functionally, an accessory protein needed during the final step in the assembly of 30S ribosomal subunit, possibly for assembly of the head region. Essential for efficient processing of 16S rRNA. May be needed both before and after RbfA during the maturation of 16S rRNA. It has affinity for free ribosomal 30S subunits but not for 70S ribosomes. The polypeptide is Ribosome maturation factor RimM (Clostridium acetobutylicum (strain ATCC 824 / DSM 792 / JCM 1419 / IAM 19013 / LMG 5710 / NBRC 13948 / NRRL B-527 / VKM B-1787 / 2291 / W)).